The chain runs to 723 residues: MLSSMVAAGSVKAALQVAEVLEAIVSCCVGPEGRQVLCTKPTGEVLLSRNGGRLLEALHLEHPIARMIVDCVSSHLKKTGDGAKTFIIFLCHLLRGLHAITDSEKDPLMCENIQTHGRHWKNCSQWKCISQALLTFQTQILDGIMDQYLSRHFLSIFSSAKEKTLCRSSLELLLEAYFCGRVGRNNHKFISQLMCDYFFKCMTCESGIGVFELVDDYFVELNVGVTGLPVSDSRIIAGLVLQKDFSVYCPADGDIRMVIVTETVQPLFSTSGSEFILNSEAQFQTSQFWIMEKTQAIMKHLHSQNVKLLISSVKQPDLVIYYAGVNGISVVECLSSEEVSLIRRIIGLSPFVPPQAFSQCEIPNTALVKFCKPLILRSKRYVHLGLISTCAFIPHSIVLCGPLQGLIEQHEDALHGAFKMLRQLFKDLDLSYITQTNDQNGTSSLFIYKNSGESYQAPDTGNGSIQRPYQDTVVENKDELEKTQTYLKVHSNLVISDVELETYIPYSTPTLTPTDTFQTVETLTCLSLERNRLTDYYEPLLKNNSTAYSTRGNRIEISYENLQVTNITGKGSMLPVSCKLQNMGTSQSYLSSSMPAGCVLPVGGNFEILLHYYLLNYAKKCHQPEETMVSMIIANALLGIPKVLYKSKTGKYSFPHTYIRAVHALQTNQPLVSSQTGLESVTGKYQLLTSVLQCLTKILTIDVVITVKRDPQKVHNQDSEDEL.

The protein belongs to the TCP-1 chaperonin family. As to quaternary structure, component of a complex composed at least of MKKS, BBS10, BBS12, TCP1, CCT2, CCT3, CCT4, CCT5 and CCT8.

The protein resides in the cell projection. Its subcellular location is the cilium. Probable molecular chaperone that assists the folding of proteins upon ATP hydrolysis. Plays a role in the assembly of BBSome, a complex involved in ciliogenesis regulating transports vesicles to the cilia. Involved in adipogenic differentiation. The polypeptide is BBSome complex assembly protein BBS10 (BBS10) (Pongo abelii (Sumatran orangutan)).